Reading from the N-terminus, the 303-residue chain is 4-sulfomuconolactone hydrolase (303 aa).

The protein belongs to the metallo-dependent hydrolases superfamily. Sulfomuconolactone hydrolase family. In terms of assembly, monomer. Zn(2+) serves as cofactor.

It carries out the reaction 4-sulfomuconolactone + H2O = maleylacetate + sulfite + 2 H(+). With respect to regulation, completely inhibited by ZnCl(2) and CuCl(2). In terms of biological role, involved in the degradation of 4-sulfocatechol which is a central intermediate in the degradation of substituted sulfonated benzenes. Catalyzes the hydrolytical desulfonation of 4-sulfomuconolactone to yield maleylacetate. In Hydrogenophaga intermedia, this protein is 4-sulfomuconolactone hydrolase.